We begin with the raw amino-acid sequence, 275 residues long: Large ribosomal subunit protein uL2cz (275 aa).

2 disordered regions span residues 1-22 and 226-275; these read MAIH…DSQV and NPVD…RRRK.

It belongs to the universal ribosomal protein uL2 family. Part of the 50S ribosomal subunit.

The protein resides in the plastid. It is found in the chloroplast. This chain is Large ribosomal subunit protein uL2cz (rpl2-A), found in Chloranthus spicatus (Chulantree).